We begin with the raw amino-acid sequence, 1675 residues long: Clathrin heavy chain 1 (1675 aa).

Residue A2 is modified to N-acetylalanine. The tract at residues 2 to 479 is globular terminal domain; that stretch reads AQILPIRFQE…VDPTLALSVY (478 aa). WD40-like repeat stretches follow at residues 24-67, 68-107, 108-149, 150-195, 196-257, 258-301, and 302-330; these read NIGF…RPIS, ADSA…MTDD, VTFW…SSLA, GCQI…QPIE, GHAA…PEAQ, NDFP…ISGE, and TIFV…VCVE. A Phosphoserine modification is found at S67. T105 carries the post-translational modification Phosphothreonine. Y184 is subject to Phosphotyrosine. A Phosphothreonine modification is found at T394. Residues 449 to 465 are binding site for the uncoating ATPase, involved in lattice disassembly; the sequence is EKWLKEDKLECSEELGD. Positions 480 to 523 are flexible linker; it reads LRANVPNKVIQCFAETGQVQKIVLYAKKVGYTPDWIFLLRNVMR. Residues 524–634 are distal segment; that stretch reads ISPDQGQQFA…RALEHFTDLY (111 aa). The tract at residues 524-1675 is heavy chain arm; that stretch reads ISPDQGQQFA…QPQPGFGYSM (1152 aa). 7 CHCR repeats span residues 537-683, 686-828, 833-972, 979-1124, 1128-1269, 1274-1420, and 1423-1566; these read VQDE…QICV, ASKY…SEDV, ILVV…PLID, LSET…VKEA, YIKA…FRLA, LHIV…LLLN, and LMVL…RECF. A Phosphotyrosine modification is found at Y634. Residues 639–1675 form a proximal segment region; the sequence is AVVHTHLLNP…QPQPGFGYSM (1037 aa). K737 bears the N6-succinyllysine mark. K856 bears the N6-acetyllysine mark. A Phosphotyrosine modification is found at Y899. The residue at position 1167 (S1167) is a Phosphoserine. Y1206 is subject to Phosphotyrosine. Residues 1213-1522 form an involved in binding clathrin light chain region; that stretch reads AAKLLYNNVS…YLFKGNNRWK (310 aa). S1229 bears the Phosphoserine mark. K1441 carries the N6-acetyllysine; alternate modification. Position 1441 is an N6-succinyllysine; alternate (K1441). 2 positions are modified to phosphotyrosine: Y1477 and Y1487. S1494 is modified (phosphoserine). K1501 carries the N6-acetyllysine modification. A trimerization region spans residues 1550-1675; that stretch reads AEELLQWFLQ…QPQPGFGYSM (126 aa).

The protein belongs to the clathrin heavy chain family. In terms of assembly, clathrin triskelions, composed of 3 heavy chains and 3 light chains, are the basic subunits of the clathrin coat. In the presence of light chains, hub assembly is influenced by both the pH and the concentration of calcium. Interacts with HIP1. Interacts with DENND1A, DENND1B and DENND1C. Interacts with OCRL. Interacts with ERBB2. Interacts with FKBP6. Interacts with CKAP5 and TACC3 forming the TACC3/ch-TOG/clathrin complex located at spindle inter-microtubules bridges; the complex implicates clathrin triskelions; TACC3 and CLTC are proposed to form a composite microtubule interaction surface. Interacts with ATG16L1 (via N-terminus). Interacts with RFTN1; the interaction occurs in response to pathogens. Interacts with TMEM106B (via N-terminus). Interacts with DNAJC6; this interaction produces a local change in heavy-chain contacts, creating a detectable global distortion of the clathrin coat and leads to the recruitment of HSPA8.

Its subcellular location is the cytoplasmic vesicle membrane. It is found in the membrane. The protein resides in the coated pit. The protein localises to the melanosome. It localises to the cytoplasm. Its subcellular location is the cytoskeleton. It is found in the spindle. Functionally, clathrin is the major protein of the polyhedral coat of coated pits and vesicles. Two different adapter protein complexes link the clathrin lattice either to the plasma membrane or to the trans-Golgi network. Acts as a component of the TACC3/ch-TOG/clathrin complex proposed to contribute to stabilization of kinetochore fibers of the mitotic spindle by acting as inter-microtubule bridge. The TACC3/ch-TOG/clathrin complex is required for the maintenance of kinetochore fiber tension. Plays a role in early autophagosome formation. Interaction with DNAJC6 mediates the recruitment of HSPA8 to the clathrin lattice and creates local destabilization of the lattice promoting uncoating. This is Clathrin heavy chain 1 from Bos taurus (Bovine).